The chain runs to 203 residues: Cutinase pbc1 (203 aa).

Residues 1–18 form the signal peptide; that stretch reads MKVTALGNTLTGFGQALA. Cysteines 32 and 107 form a disulfide. The active-site Nucleophile is Ser118. Cys166 and Cys173 are disulfide-bonded. Residue His170 is part of the active site. His183 functions as the Proton donor/acceptor in the catalytic mechanism.

Belongs to the cutinase family. Post-translationally, the 2 disulfide bonds play a critical role in holding the catalytic residues in juxta-position; reduction of the disulfide bridges results in the complete inactivation of the enzyme.

It is found in the secreted. It catalyses the reaction cutin + H2O = cutin monomers.. Catalyzes the hydrolysis of complex carboxylic polyesters found in the cell wall of plants. Degrades cutin, a macromolecule that forms the structure of the plant cuticle. Allows pathogenic fungi to penetrate through the cuticular barrier into the host plant during the initial stage of fungal infection. This chain is Cutinase pbc1, found in Pyrenopeziza brassicae.